The primary structure comprises 293 residues: 4-hydroxy-tetrahydrodipicolinate synthase (293 aa).

Thr45 provides a ligand contact to pyruvate. Tyr133 acts as the Proton donor/acceptor in catalysis. Lys162 (schiff-base intermediate with substrate) is an active-site residue. Ile204 is a binding site for pyruvate.

It belongs to the DapA family. Homotetramer; dimer of dimers.

It localises to the cytoplasm. The catalysed reaction is L-aspartate 4-semialdehyde + pyruvate = (2S,4S)-4-hydroxy-2,3,4,5-tetrahydrodipicolinate + H2O + H(+). The protein operates within amino-acid biosynthesis; L-lysine biosynthesis via DAP pathway; (S)-tetrahydrodipicolinate from L-aspartate: step 3/4. Catalyzes the condensation of (S)-aspartate-beta-semialdehyde [(S)-ASA] and pyruvate to 4-hydroxy-tetrahydrodipicolinate (HTPA). This Chelativorans sp. (strain BNC1) protein is 4-hydroxy-tetrahydrodipicolinate synthase.